A 145-amino-acid chain; its full sequence is Snaclec salmorin subunit B (145 aa).

The N-terminal stretch at 1–23 (MGRFIFVSFGLLVVFVSLSGTGA) is a signal peptide. Intrachain disulfides connect C25–C36, C53–C141, and C118–C133. Residues 32–142 (YEGHCYKLFN…CRMEAYFVCE (111 aa)) form the C-type lectin domain. Residues S64 and E70 each coordinate Ca(2+). E142 lines the Ca(2+) pocket.

This sequence belongs to the snaclec family. Heterodimer of subunits A and B; disulfide-linked. In terms of tissue distribution, expressed by the venom gland.

It localises to the secreted. In terms of biological role, inhibits thrombin-induced fibrinogen clotting and factor Xa-induced prothrombin activation. Binds to thrombin and prothrombin exosites. This is Snaclec salmorin subunit B from Gloydius brevicauda (Korean slamosa snake).